Reading from the N-terminus, the 212-residue chain is External core antigen (212 aa).

The N-terminal stretch at 1 to 19 (MQLFHLCLIISCSCPTVQA) is a signal peptide. The tract at residues 25–27 (GWL) is HBEAG. Residues 172–212 (LPETTVVRRRGRSPRRRTPSPRRRRSKSPRRRRSQSRESQC) form a disordered region. The segment covering 178–205 (VRRRGRSPRRRTPSPRRRRSKSPRRRRS) has biased composition (basic residues). One copy of the 1; half-length repeat lies at 184–189 (SPRRRT). A 3 X 7 AA repeats of S-P-R-R-R-R-S region spans residues 184 to 205 (SPRRRTPSPRRRRSKSPRRRRS). A propeptide spanning residues 184–212 (SPRRRTPSPRRRRSKSPRRRRSQSRESQC) is cleaved from the precursor. Tandem repeats lie at residues 191-197 (SPRRRRS) and 199-205 (SPRRRRS).

The protein belongs to the orthohepadnavirus precore antigen family. In terms of assembly, homodimerizes. In terms of processing, phosphorylated. Post-translationally, cleaved by host furin.

The protein localises to the secreted. The protein resides in the host nucleus. Its function is as follows. May regulate immune response to the intracellular capsid in acting as a T-cell tolerogen, by having an immunoregulatory effect which prevents destruction of infected cells by cytotoxic T-cells. This immune regulation may predispose to chronicity during perinatal infections and prevent severe liver injury during adult infections. This chain is External core antigen, found in Hepatitis B virus genotype C subtype adr (isolate Japan/Nishioka/1983) (HBV-C).